Reading from the N-terminus, the 788-residue chain is ATP-dependent 6-phosphofructokinase, platelet type (788 aa).

Methionine 1 bears the N-acetylmethionine mark. The segment at 1–399 (MSDQDSSTSS…NLNTYKRLAI (399 aa)) is N-terminal catalytic PFK domain 1. 4 positions are modified to phosphoserine: serine 2, serine 6, serine 12, and serine 21. ATP is bound by residues glycine 34, 97–98 (RC), and 127–130 (GDGS). A Mg(2+)-binding site is contributed by aspartate 128. Serine 142 carries the phosphoserine modification. Substrate-binding positions include 173–175 (SID), arginine 210, 217–219 (MGR), glutamate 273, arginine 301, and 307–310 (HVQR). Aspartate 175 acts as the Proton acceptor in catalysis. Serine 386 carries the post-translational modification Phosphoserine. At lysine 395 the chain carries N6-acetyllysine. The interdomain linker stretch occupies residues 400–411 (KEPDDKIPKSNC). The interval 412-788 (NVAIINVGAP…VHNHGELSAI (377 aa)) is C-terminal regulatory PFK domain 2. Position 481 (arginine 481) interacts with beta-D-fructose 2,6-bisphosphate. Lysine 486 is modified (N6-acetyllysine). Beta-D-fructose 2,6-bisphosphate contacts are provided by residues 538–542 (TVSNN), arginine 576, 583–585 (MGG), and glutamate 639. O-linked (GlcNAc) serine glycosylation occurs at serine 540. At tyrosine 651 the chain carries Phosphotyrosine. Beta-D-fructose 2,6-bisphosphate is bound by residues arginine 665 and 671 to 674 (HMQQ). Lysine 688 is modified (N6-acetyllysine). Arginine 744 contributes to the beta-D-fructose 2,6-bisphosphate binding site.

It belongs to the phosphofructokinase type A (PFKA) family. ATP-dependent PFK group I subfamily. Eukaryotic two domain clade 'E' sub-subfamily. Homo- and heterotetramers. Phosphofructokinase (PFK) enzyme functions as a tetramer composed of different combinations of 3 types of subunits, called PFKM (M), PFKL (L) and PFKP (P). The composition of the PFK tetramer differs according to the tissue type it is present in. The kinetic and regulatory properties of the tetrameric enzyme are dependent on the subunit composition, hence can vary across tissues. Interacts with ATG4B; promoting phosphorylation of ATG4B. Mg(2+) is required as a cofactor. GlcNAcylation decreases enzyme activity. In terms of processing, phosphorylation at Ser-386 promotes interaction with ATG4B. Expressed at high level in neuroendocrine tissues.

It is found in the cytoplasm. It carries out the reaction beta-D-fructose 6-phosphate + ATP = beta-D-fructose 1,6-bisphosphate + ADP + H(+). Its pathway is carbohydrate degradation; glycolysis; D-glyceraldehyde 3-phosphate and glycerone phosphate from D-glucose: step 3/4. Allosterically activated by ADP, AMP, or fructose 2,6-bisphosphate, and allosterically inhibited by ATP or citrate. Its function is as follows. Catalyzes the phosphorylation of D-fructose 6-phosphate to fructose 1,6-bisphosphate by ATP, the first committing step of glycolysis. This chain is ATP-dependent 6-phosphofructokinase, platelet type (Pfkp), found in Rattus norvegicus (Rat).